We begin with the raw amino-acid sequence, 161 residues long: Nucleotide-binding protein Bpro_1596 (161 aa).

This sequence belongs to the YajQ family.

In terms of biological role, nucleotide-binding protein. The polypeptide is Nucleotide-binding protein Bpro_1596 (Polaromonas sp. (strain JS666 / ATCC BAA-500)).